The following is a 151-amino-acid chain: Troponin C, isoallergen Bla g 6.0101 (151 aa).

4 consecutive EF-hand domains span residues 7-42 (EQIQLLKKAFDAFDREKKGCISTEMVGTILEMLGHR), 43-78 (LDDDMLQEIIAEVDADGSGELEFEEFVSLASRFLVE), 83-118 (AMQQELREAFRLYDKEGNGYITTNVLREILKELDDK), and 119-151 (ITAEDLDMMIEEIDSDGSGTVDFDEFMEVMTGE). Positions 56, 58, 60, 62, and 67 each coordinate Ca(2+). Residues Asp132, Asp134, Ser136, Thr138, and Glu143 each coordinate Ca(2+).

Belongs to the troponin C family.

Troponin is the central regulatory protein of striated muscle contraction. It consists of three components: Troponin-I (Tn-I) which is the inhibitor of actomyosin ATPase, Troponin-T (Tn-T) which contains the binding site for tropomyosin and Troponin-C (Tn-C). The binding of calcium to Tn-C abolishes the inhibitory action of Tn on actin filaments. This chain is Troponin C, isoallergen Bla g 6.0101, found in Blattella germanica (German cockroach).